The chain runs to 203 residues: Pyridoxine/pyridoxamine 5'-phosphate oxidase (203 aa).

Residues 50–55 (RMVLLK), 65–66 (YT), K71, K72, and Q94 contribute to the FMN site. K55 is a binding site for substrate. Substrate contacts are provided by Y112, R116, and S120. Residues 129 to 130 (QS) and W174 contribute to the FMN site. 180–182 (RLH) contributes to the substrate binding site. An FMN-binding site is contributed by R184.

The protein belongs to the pyridoxamine 5'-phosphate oxidase family. In terms of assembly, homodimer. The cofactor is FMN.

It carries out the reaction pyridoxamine 5'-phosphate + O2 + H2O = pyridoxal 5'-phosphate + H2O2 + NH4(+). The enzyme catalyses pyridoxine 5'-phosphate + O2 = pyridoxal 5'-phosphate + H2O2. It functions in the pathway cofactor metabolism; pyridoxal 5'-phosphate salvage; pyridoxal 5'-phosphate from pyridoxamine 5'-phosphate: step 1/1. The protein operates within cofactor metabolism; pyridoxal 5'-phosphate salvage; pyridoxal 5'-phosphate from pyridoxine 5'-phosphate: step 1/1. In terms of biological role, catalyzes the oxidation of either pyridoxine 5'-phosphate (PNP) or pyridoxamine 5'-phosphate (PMP) into pyridoxal 5'-phosphate (PLP). The chain is Pyridoxine/pyridoxamine 5'-phosphate oxidase from Brucella canis (strain ATCC 23365 / NCTC 10854 / RM-666).